The chain runs to 475 residues: Methyltransferase-like protein 25B (475 aa).

The stretch at 185 to 210 (NKRLVARAQRLDQELLQALDKMEKRH) forms a coiled coil. The helical transmembrane segment at 406 to 426 (VVAFFSLALLLAPLVETLILL) threads the bilayer.

This sequence belongs to the METTL25 family.

It is found in the membrane. The polypeptide is Methyltransferase-like protein 25B (Rattus norvegicus (Rat)).